The primary structure comprises 212 residues: Pyridoxine/pyridoxamine 5'-phosphate oxidase (212 aa).

Residues 8–11 (RREY) and Lys-66 contribute to the substrate site. FMN is bound by residues 61–66 (RIVLLK), 76–77 (FT), Arg-82, Lys-83, and Gln-105. Residues Tyr-123, Arg-127, and Ser-131 each contribute to the substrate site. Residues 140 to 141 (QS) and Trp-185 contribute to the FMN site. 191-193 (RLH) is a binding site for substrate. An FMN-binding site is contributed by Arg-195.

The protein belongs to the pyridoxamine 5'-phosphate oxidase family. As to quaternary structure, homodimer. It depends on FMN as a cofactor.

The catalysed reaction is pyridoxamine 5'-phosphate + O2 + H2O = pyridoxal 5'-phosphate + H2O2 + NH4(+). The enzyme catalyses pyridoxine 5'-phosphate + O2 = pyridoxal 5'-phosphate + H2O2. Its pathway is cofactor metabolism; pyridoxal 5'-phosphate salvage; pyridoxal 5'-phosphate from pyridoxamine 5'-phosphate: step 1/1. It participates in cofactor metabolism; pyridoxal 5'-phosphate salvage; pyridoxal 5'-phosphate from pyridoxine 5'-phosphate: step 1/1. Catalyzes the oxidation of either pyridoxine 5'-phosphate (PNP) or pyridoxamine 5'-phosphate (PMP) into pyridoxal 5'-phosphate (PLP). The sequence is that of Pyridoxine/pyridoxamine 5'-phosphate oxidase from Shewanella amazonensis (strain ATCC BAA-1098 / SB2B).